The sequence spans 84 residues: Small ribosomal subunit protein uS15 (84 aa).

Belongs to the universal ribosomal protein uS15 family. In terms of assembly, part of the 30S ribosomal subunit. Forms a bridge to the 50S subunit in the 70S ribosome, contacting the 23S rRNA.

Functionally, one of the primary rRNA binding proteins, it binds directly to 16S rRNA where it helps nucleate assembly of the platform of the 30S subunit by binding and bridging several RNA helices of the 16S rRNA. Forms an intersubunit bridge (bridge B4) with the 23S rRNA of the 50S subunit in the ribosome. The sequence is that of Small ribosomal subunit protein uS15 from Akkermansia muciniphila (strain ATCC BAA-835 / DSM 22959 / JCM 33894 / BCRC 81048 / CCUG 64013 / CIP 107961 / Muc).